Here is a 350-residue protein sequence, read N- to C-terminus: Mannonate dehydratase (350 aa).

It belongs to the mannonate dehydratase family. It depends on Fe(2+) as a cofactor. The cofactor is Mn(2+).

It catalyses the reaction D-mannonate = 2-dehydro-3-deoxy-D-gluconate + H2O. The protein operates within carbohydrate metabolism; pentose and glucuronate interconversion. Functionally, catalyzes the dehydration of D-mannonate. This is Mannonate dehydratase from Clostridium perfringens (strain 13 / Type A).